Here is a 652-residue protein sequence, read N- to C-terminus: DNA ligase (652 aa).

Residues 29-33 (DSDYD), 78-79 (SL), and E107 contribute to the NAD(+) site. The active-site N6-AMP-lysine intermediate is the K109. 4 residues coordinate NAD(+): R130, E164, K278, and K302. C395, C398, C413, and C418 together coordinate Zn(2+). The 76-residue stretch at 577–652 (NSDAALFGLT…IEDEDWLRKL (76 aa)) folds into the BRCT domain.

Belongs to the NAD-dependent DNA ligase family. LigA subfamily. It depends on Mg(2+) as a cofactor. Mn(2+) serves as cofactor.

It catalyses the reaction NAD(+) + (deoxyribonucleotide)n-3'-hydroxyl + 5'-phospho-(deoxyribonucleotide)m = (deoxyribonucleotide)n+m + AMP + beta-nicotinamide D-nucleotide.. In terms of biological role, DNA ligase that catalyzes the formation of phosphodiester linkages between 5'-phosphoryl and 3'-hydroxyl groups in double-stranded DNA using NAD as a coenzyme and as the energy source for the reaction. It is essential for DNA replication and repair of damaged DNA. The protein is DNA ligase of Streptococcus pyogenes serotype M18 (strain MGAS8232).